The chain runs to 260 residues: Indole-3-glycerol phosphate synthase (260 aa).

The protein belongs to the TrpC family.

It carries out the reaction 1-(2-carboxyphenylamino)-1-deoxy-D-ribulose 5-phosphate + H(+) = (1S,2R)-1-C-(indol-3-yl)glycerol 3-phosphate + CO2 + H2O. Its pathway is amino-acid biosynthesis; L-tryptophan biosynthesis; L-tryptophan from chorismate: step 4/5. The sequence is that of Indole-3-glycerol phosphate synthase from Chloroherpeton thalassium (strain ATCC 35110 / GB-78).